The following is a 447-amino-acid chain: tRNA-2-methylthio-N(6)-dimethylallyladenosine synthase (447 aa).

The MTTase N-terminal domain occupies 1–116 (MYIRTFGCQM…LPDLIKRRRA (116 aa)). The [4Fe-4S] cluster site is built by C8, C45, C79, C153, C157, and C160. One can recognise a Radical SAM core domain in the interval 139 to 372 (RVDGATAFVS…QALINQQAAA (234 aa)). In terms of domain architecture, TRAM spans 375–438 (QGMIGTRQRV…TNSLRGRVAG (64 aa)).

This sequence belongs to the methylthiotransferase family. MiaB subfamily. As to quaternary structure, monomer. [4Fe-4S] cluster is required as a cofactor.

Its subcellular location is the cytoplasm. The enzyme catalyses N(6)-dimethylallyladenosine(37) in tRNA + (sulfur carrier)-SH + AH2 + 2 S-adenosyl-L-methionine = 2-methylsulfanyl-N(6)-dimethylallyladenosine(37) in tRNA + (sulfur carrier)-H + 5'-deoxyadenosine + L-methionine + A + S-adenosyl-L-homocysteine + 2 H(+). Its function is as follows. Catalyzes the methylthiolation of N6-(dimethylallyl)adenosine (i(6)A), leading to the formation of 2-methylthio-N6-(dimethylallyl)adenosine (ms(2)i(6)A) at position 37 in tRNAs that read codons beginning with uridine. The protein is tRNA-2-methylthio-N(6)-dimethylallyladenosine synthase of Bordetella pertussis (strain Tohama I / ATCC BAA-589 / NCTC 13251).